Consider the following 88-residue polypeptide: Translation initiation factor IF-1 2 (88 aa).

The S1-like domain maps to 1–72; it reads MAKEELIELQ…TKGRINFRHK (72 aa).

It belongs to the IF-1 family. As to quaternary structure, component of the 30S ribosomal translation pre-initiation complex which assembles on the 30S ribosome in the order IF-2 and IF-3, IF-1 and N-formylmethionyl-tRNA(fMet); mRNA recruitment can occur at any time during PIC assembly.

The protein resides in the cytoplasm. Its function is as follows. One of the essential components for the initiation of protein synthesis. Stabilizes the binding of IF-2 and IF-3 on the 30S subunit to which N-formylmethionyl-tRNA(fMet) subsequently binds. Helps modulate mRNA selection, yielding the 30S pre-initiation complex (PIC). Upon addition of the 50S ribosomal subunit IF-1, IF-2 and IF-3 are released leaving the mature 70S translation initiation complex. In Bordetella avium (strain 197N), this protein is Translation initiation factor IF-1 2.